Here is a 186-residue protein sequence, read N- to C-terminus: Testis-expressed protein 29 (186 aa).

At 1 to 56 (MKDTKEIKRSPPHLLKKFAVCDIPLYDICDYNVTRERCRSLDCCFYRGVCYEKAVP) the chain is on the extracellular side. Residues 57–77 (IYVQVFFTLIWFVAGAFIIAV) form a helical membrane-spanning segment. Residues 78 to 151 (IYRVIQGTKK…AGCCLWMKSK (74 aa)) are Cytoplasmic-facing. 2 disordered regions span residues 104 to 138 (SPTP…KTES) and 151 to 186 (KPAK…QAAP). Over residues 108 to 133 (ELIPEPIPEPIPEPIPEPIREPPPPV) the composition is skewed to pro residues.

It localises to the membrane. In Mus musculus (Mouse), this protein is Testis-expressed protein 29 (Tex29).